We begin with the raw amino-acid sequence, 501 residues long: UPF0288 protein Maeo_0995 (501 aa).

It belongs to the UPF0288 family.

The polypeptide is UPF0288 protein Maeo_0995 (Methanococcus aeolicus (strain ATCC BAA-1280 / DSM 17508 / OCM 812 / Nankai-3)).